The following is an 86-amino-acid chain: Serine protease inhibitor Kazal-type 2 (86 aa).

A signal peptide spans Met1–Ser16. Positions Gln32 to Cys86 constitute a Kazal-like domain. Disulfide bonds link Cys38–Cys68, Cys46–Cys65, and Cys54–Cys86.

In terms of tissue distribution, expressed in sperm (at protein level). Expressed in testis but not in ovary, brain, heart, kidney or lung. Within testis, expressed in epididymis and germ cells.

It localises to the secreted. The protein resides in the cytoplasmic vesicle. It is found in the secretory vesicle. Its subcellular location is the acrosome. Functionally, as a strong inhibitor of acrosin, it is required for normal spermiogenesis. It probably hinders premature activation of proacrosin and other proteases, thus preventing the cascade of events leading to spermiogenesis defects. May be involved in the regulation of serine protease-dependent germ cell apoptosis. It also inhibits trypsin. The polypeptide is Serine protease inhibitor Kazal-type 2 (Spink2) (Mus musculus (Mouse)).